The sequence spans 430 residues: Aspartate aminotransferase, mitochondrial (430 aa).

The transit peptide at 1–29 (MALLHSGRVLSGVASAFHPGLAAAASARA) directs the protein to the mitochondrion. Thr-48 is subject to Phosphothreonine. Lys-59 is modified (N6-acetyllysine). Residue Gly-65 coordinates substrate. Lys-73 is modified (N6-acetyllysine; alternate). Lys-73 carries the N6-succinyllysine; alternate modification. Lys-82 is modified (N6-acetyllysine). Lys-90 is subject to N6-acetyllysine; alternate. The residue at position 90 (Lys-90) is an N6-succinyllysine; alternate. Position 96 is a 3'-nitrotyrosine; alternate (Tyr-96). A Phosphotyrosine; alternate modification is found at Tyr-96. Residues Lys-107, Lys-122, and Lys-159 each carry the N6-acetyllysine; alternate modification. 3 positions are modified to N6-succinyllysine; alternate: Lys-107, Lys-122, and Lys-159. Trp-162 provides a ligand contact to substrate. Lys-185 carries the N6-acetyllysine; alternate modification. Lys-185 is subject to N6-succinyllysine; alternate. Asn-215 serves as a coordination point for substrate. An N6-succinyllysine modification is found at Lys-227. Lys-234 is modified (N6-acetyllysine). N6-acetyllysine; alternate is present on residues Lys-279 and Lys-296. Lys-279 carries the post-translational modification N6-(pyridoxal phosphate)lysine; alternate. Lys-296 bears the N6-succinyllysine; alternate mark. Lys-302 is modified (N6-acetyllysine). N6-acetyllysine; alternate is present on Lys-309. Lys-309 bears the N6-succinyllysine; alternate mark. Arg-313 bears the Asymmetric dimethylarginine mark. Lys-345 is modified (N6-acetyllysine). N6-acetyllysine; alternate is present on Lys-363. The residue at position 363 (Lys-363) is an N6-succinyllysine; alternate. N6-acetyllysine is present on residues Lys-364 and Lys-387. Residues Lys-396 and Lys-404 each carry the N6-acetyllysine; alternate modification. N6-succinyllysine; alternate occurs at positions 396 and 404. Arg-407 serves as a coordination point for substrate.

This sequence belongs to the class-I pyridoxal-phosphate-dependent aminotransferase family. As to quaternary structure, homodimer. Pyridoxal 5'-phosphate is required as a cofactor.

It is found in the mitochondrion matrix. It localises to the cell membrane. It carries out the reaction L-aspartate + 2-oxoglutarate = oxaloacetate + L-glutamate. The catalysed reaction is L-kynurenine + 2-oxoglutarate = kynurenate + L-glutamate + H2O. Functionally, catalyzes the irreversible transamination of the L-tryptophan metabolite L-kynurenine to form kynurenic acid (KA). As a member of the malate-aspartate shuttle, it has a key role in the intracellular NAD(H) redox balance. Is important for metabolite exchange between mitochondria and cytosol, and for amino acid metabolism. Facilitates cellular uptake of long-chain free fatty acids. The polypeptide is Aspartate aminotransferase, mitochondrial (GOT2) (Sus scrofa (Pig)).